A 484-amino-acid chain; its full sequence is MTKEQQLAERIIAAVGGMDNIDSVMNCMTRVRIKVLDENKVDDQELRHIDGVMGVIHDERIQVVVGPGTVNKVANHMAELSGVKLGDPIPHHHNDSEKMDYKSYAADKAKANKEAHKAKQKNGKLNKVLKSIANIFIPLIPAFIGAGLIGGIAAVLSNLMVAGYISGAWITQLITVFNVIKDGMLAYLAIFTGINAAKEFGATPGLGGVIGGTTLLTGIAGKNILMNVFTGEPLQPGQGGIIGVIFAVWILSIVEKRLHKIVPNAIDIIVTPTIALLIVGLLTIFIFMPLAGFVSDSLVSVVNGIISIGGVFSGFIIGASFLPLVMLGLHHIFTPIHIEMINQSGATYLLPIAAMAGAGQVGAALALWVRCKRNTTLRNTLKGALPVGFLGIGEPLIYGVTLPLGRPFLTACIGGGIGGAVIGGIGHIGAKAIGPSGVSLLPLISDNMYLGYIAGLLAAYAGGFVCTYLFGTTKAMRQTDLLGD.

In terms of domain architecture, PTS EIIB type-1 spans 5 to 87 (QQLAERIIAA…AELSGVKLGD (83 aa)). Residue cysteine 27 is the Phosphocysteine intermediate; for EIIB activity of the active site. In terms of domain architecture, PTS EIIC type-1 spans 130 to 484 (KSIANIFIPL…AMRQTDLLGD (355 aa)). 10 consecutive transmembrane segments (helical) span residues 135-155 (IFIP…IAAV), 160-180 (MVAG…FNVI), 200-220 (FGAT…TGIA), 234-254 (LQPG…LSIV), 274-294 (IALL…AGFV), 305-325 (IISI…LPLV), 349-369 (LLPI…ALWV), 384-404 (ALPV…TLPL), 408-428 (FLTA…IGHI), and 450-470 (LGYI…TYLF).

The protein localises to the cell membrane. It catalyses the reaction N-acetyl-beta-D-muramate-(1-&gt;4)-N-acetyl-D-glucosamine(out) + N(pros)-phospho-L-histidyl-[protein] = 6-phospho-N-acetyl-beta-D-muramate-(1-&gt;4)-N-acetyl-D-glucosamine(in) + L-histidyl-[protein]. The protein operates within cell wall biogenesis; peptidoglycan recycling. Functionally, the phosphoenolpyruvate-dependent sugar phosphotransferase system (sugar PTS), a major carbohydrate active transport system, catalyzes the phosphorylation of incoming sugar substrates concomitantly with their translocation across the cell membrane. This system is involved in the uptake and phosphorylation of MurNAc-GlcNAc, the principle peptidoglycan turnover product of S.aureus, yielding cytoplasmic MurNAc 6P-GlcNAc. In Staphylococcus aureus (strain Mu50 / ATCC 700699), this protein is PTS system MurNAc-GlcNAc-specific EIIBC component.